A 177-amino-acid chain; its full sequence is UPF0251 protein Cag_0886 (177 aa).

Positions glycine 147 to glutamate 177 are disordered.

It belongs to the UPF0251 family.

In Chlorobium chlorochromatii (strain CaD3), this protein is UPF0251 protein Cag_0886.